Consider the following 243-residue polypeptide: Ubiquinone/menaquinone biosynthesis C-methyltransferase UbiE (243 aa).

S-adenosyl-L-methionine-binding positions include Thr69, Asp90, and 116 to 117; that span reads DA.

It belongs to the class I-like SAM-binding methyltransferase superfamily. MenG/UbiE family.

It catalyses the reaction a 2-demethylmenaquinol + S-adenosyl-L-methionine = a menaquinol + S-adenosyl-L-homocysteine + H(+). It carries out the reaction a 2-methoxy-6-(all-trans-polyprenyl)benzene-1,4-diol + S-adenosyl-L-methionine = a 5-methoxy-2-methyl-3-(all-trans-polyprenyl)benzene-1,4-diol + S-adenosyl-L-homocysteine + H(+). Its pathway is quinol/quinone metabolism; menaquinone biosynthesis; menaquinol from 1,4-dihydroxy-2-naphthoate: step 2/2. It functions in the pathway cofactor biosynthesis; ubiquinone biosynthesis. Its function is as follows. Methyltransferase required for the conversion of demethylmenaquinol (DMKH2) to menaquinol (MKH2) and the conversion of 2-polyprenyl-6-methoxy-1,4-benzoquinol (DDMQH2) to 2-polyprenyl-3-methyl-6-methoxy-1,4-benzoquinol (DMQH2). The sequence is that of Ubiquinone/menaquinone biosynthesis C-methyltransferase UbiE from Burkholderia vietnamiensis (strain G4 / LMG 22486) (Burkholderia cepacia (strain R1808)).